A 239-amino-acid chain; its full sequence is Peptidyl-tRNA hydrolase (239 aa).

Tyr-14 contributes to the tRNA binding site. His-19 serves as the catalytic Proton acceptor. Phe-64, Asn-66, and Asn-112 together coordinate tRNA. The tract at residues 188–239 is disordered; that stretch reads APPRSSTSKPKAQDNREDAAQAAEERSETRTPPEARPEDTRSALQKLADKFR. Positions 198–239 are enriched in basic and acidic residues; it reads KAQDNREDAAQAAEERSETRTPPEARPEDTRSALQKLADKFR.

Belongs to the PTH family. In terms of assembly, monomer.

The protein resides in the cytoplasm. The catalysed reaction is an N-acyl-L-alpha-aminoacyl-tRNA + H2O = an N-acyl-L-amino acid + a tRNA + H(+). In terms of biological role, hydrolyzes ribosome-free peptidyl-tRNAs (with 1 or more amino acids incorporated), which drop off the ribosome during protein synthesis, or as a result of ribosome stalling. Catalyzes the release of premature peptidyl moieties from peptidyl-tRNA molecules trapped in stalled 50S ribosomal subunits, and thus maintains levels of free tRNAs and 50S ribosomes. This Jannaschia sp. (strain CCS1) protein is Peptidyl-tRNA hydrolase.